The chain runs to 291 residues: N-acetylmannosamine kinase (291 aa).

ATP contacts are provided by residues 5-12 (AIDIGGTK) and 132-139 (GVGGGVVS). Residues His156, Cys166, Cys168, and Cys173 each coordinate Zn(2+).

Belongs to the ROK (NagC/XylR) family. NanK subfamily. In terms of assembly, homodimer.

The enzyme catalyses an N-acyl-D-mannosamine + ATP = an N-acyl-D-mannosamine 6-phosphate + ADP + H(+). It participates in amino-sugar metabolism; N-acetylneuraminate degradation; D-fructose 6-phosphate from N-acetylneuraminate: step 2/5. Its function is as follows. Catalyzes the phosphorylation of N-acetylmannosamine (ManNAc) to ManNAc-6-P. The polypeptide is N-acetylmannosamine kinase (Shigella boydii serotype 18 (strain CDC 3083-94 / BS512)).